Reading from the N-terminus, the 459-residue chain is Bifunctional protein GlmU (459 aa).

Residues 1-229 (MSNFAIILAA…FDESLGVNDR (229 aa)) are pyrophosphorylase. UDP-N-acetyl-alpha-D-glucosamine-binding positions include 8–11 (LAAG), lysine 22, glutamine 72, and 77–78 (GT). Aspartate 102 provides a ligand contact to Mg(2+). Glycine 139, glutamate 154, asparagine 169, and asparagine 227 together coordinate UDP-N-acetyl-alpha-D-glucosamine. Residue asparagine 227 coordinates Mg(2+). The tract at residues 230 to 250 (VALATAESVMRRRINHKHMVN) is linker. Residues 251 to 459 (GVSFVNPEAT…TRLPHHPKNQ (209 aa)) form an N-acetyltransferase region. Arginine 332 and lysine 350 together coordinate UDP-N-acetyl-alpha-D-glucosamine. The active-site Proton acceptor is histidine 362. UDP-N-acetyl-alpha-D-glucosamine-binding residues include tyrosine 365 and asparagine 376. Residues alanine 379, 385–386 (NY), serine 404, alanine 422, and arginine 439 each bind acetyl-CoA.

This sequence in the N-terminal section; belongs to the N-acetylglucosamine-1-phosphate uridyltransferase family. In the C-terminal section; belongs to the transferase hexapeptide repeat family. As to quaternary structure, homotrimer. Mg(2+) serves as cofactor.

It is found in the cytoplasm. The catalysed reaction is alpha-D-glucosamine 1-phosphate + acetyl-CoA = N-acetyl-alpha-D-glucosamine 1-phosphate + CoA + H(+). It carries out the reaction N-acetyl-alpha-D-glucosamine 1-phosphate + UTP + H(+) = UDP-N-acetyl-alpha-D-glucosamine + diphosphate. It participates in nucleotide-sugar biosynthesis; UDP-N-acetyl-alpha-D-glucosamine biosynthesis; N-acetyl-alpha-D-glucosamine 1-phosphate from alpha-D-glucosamine 6-phosphate (route II): step 2/2. The protein operates within nucleotide-sugar biosynthesis; UDP-N-acetyl-alpha-D-glucosamine biosynthesis; UDP-N-acetyl-alpha-D-glucosamine from N-acetyl-alpha-D-glucosamine 1-phosphate: step 1/1. It functions in the pathway bacterial outer membrane biogenesis; LPS lipid A biosynthesis. Catalyzes the last two sequential reactions in the de novo biosynthetic pathway for UDP-N-acetylglucosamine (UDP-GlcNAc). The C-terminal domain catalyzes the transfer of acetyl group from acetyl coenzyme A to glucosamine-1-phosphate (GlcN-1-P) to produce N-acetylglucosamine-1-phosphate (GlcNAc-1-P), which is converted into UDP-GlcNAc by the transfer of uridine 5-monophosphate (from uridine 5-triphosphate), a reaction catalyzed by the N-terminal domain. The protein is Bifunctional protein GlmU of Streptococcus pneumoniae (strain JJA).